We begin with the raw amino-acid sequence, 108 residues long: PTS system fructose-like EIIB component 1 (108 aa).

The region spanning 1-104 (MSKKLIALCA…IIKEIEEMIA (104 aa)) is the PTS EIIB type-2 domain. Cys11 serves as the catalytic Phosphocysteine intermediate. Cys11 bears the Phosphocysteine; by EIIA mark.

It is found in the cytoplasm. It catalyses the reaction D-fructose(out) + N(pros)-phospho-L-histidyl-[protein] = D-fructose 1-phosphate(in) + L-histidyl-[protein]. Its function is as follows. The phosphoenolpyruvate-dependent sugar phosphotransferase system (sugar PTS), a major carbohydrate active transport system, catalyzes the phosphorylation of incoming sugar substrates concomitantly with their translocation across the cell membrane. The enzyme II FryABC PTS system is involved in fructose transport. The protein is PTS system fructose-like EIIB component 1 (fryB) of Escherichia coli O157:H7.